Consider the following 233-residue polypeptide: Small ribosomal subunit protein uS3 (233 aa).

One can recognise a KH type-2 domain in the interval 39 to 107 (VRQFLMKTLE…PVQINISEVR (69 aa)).

This sequence belongs to the universal ribosomal protein uS3 family. As to quaternary structure, part of the 30S ribosomal subunit. Forms a tight complex with proteins S10 and S14.

Binds the lower part of the 30S subunit head. Binds mRNA in the 70S ribosome, positioning it for translation. The polypeptide is Small ribosomal subunit protein uS3 (Buchnera aphidicola subsp. Acyrthosiphon pisum (strain 5A)).